The sequence spans 782 residues: Endonuclease MutS2 (782 aa).

336–343 lines the ATP pocket; it reads GPNTGGKT. A Smr domain is found at 707-782; it reads LDLRGYRYED…GFGVTVATLK (76 aa).

The protein belongs to the DNA mismatch repair MutS family. MutS2 subfamily. As to quaternary structure, homodimer. Binds to stalled ribosomes, contacting rRNA.

Functionally, endonuclease that is involved in the suppression of homologous recombination and thus may have a key role in the control of bacterial genetic diversity. In terms of biological role, acts as a ribosome collision sensor, splitting the ribosome into its 2 subunits. Detects stalled/collided 70S ribosomes which it binds and splits by an ATP-hydrolysis driven conformational change. Acts upstream of the ribosome quality control system (RQC), a ribosome-associated complex that mediates the extraction of incompletely synthesized nascent chains from stalled ribosomes and their subsequent degradation. Probably generates substrates for RQC. This chain is Endonuclease MutS2, found in Staphylococcus aureus (strain Mu50 / ATCC 700699).